A 669-amino-acid chain; its full sequence is Dymeclin (669 aa).

The N-myristoyl glycine moiety is linked to residue Gly-2.

The protein belongs to the dymeclin family. In terms of assembly, interacts with GOLM1 and PPIB. In terms of processing, myristoylated in vitro; myristoylation is not essential for protein targeting to Golgi compartment.

Its subcellular location is the cytoplasm. It is found in the golgi apparatus. The protein resides in the membrane. Its function is as follows. Necessary for correct organization of Golgi apparatus. Involved in bone development. The chain is Dymeclin (DYM) from Pongo abelii (Sumatran orangutan).